The primary structure comprises 126 residues: Glycine cleavage system H protein (126 aa).

Positions 22 to 104 (VAYVGITDYA…YGEGWLIKMK (83 aa)) constitute a Lipoyl-binding domain. The residue at position 63 (K63) is an N6-lipoyllysine.

Belongs to the GcvH family. As to quaternary structure, the glycine cleavage system is composed of four proteins: P, T, L and H. Requires (R)-lipoate as cofactor.

Functionally, the glycine cleavage system catalyzes the degradation of glycine. The H protein shuttles the methylamine group of glycine from the P protein to the T protein. In Bacteroides fragilis (strain YCH46), this protein is Glycine cleavage system H protein.